A 505-amino-acid chain; its full sequence is Protein disulfide-isomerase A3 (505 aa).

A signal peptide spans 1–24 (MSVPRPSRAALLLLVPLLALSAGA). Thioredoxin domains follow at residues 25-131 (SDVV…KQAG) and 341-483 (SRDG…REAT). Catalysis depends on nucleophile residues Cys-55 and Cys-58. Intrachain disulfides connect Cys-55–Cys-58, Cys-83–Cys-90, and Cys-404–Cys-407. Active-site nucleophile residues include Cys-404 and Cys-407. The interval 486–505 (PVLQEEDKAKKSKKKAKEDL) is disordered. Positions 495-505 (KKSKKKAKEDL) are enriched in basic residues. A Prevents secretion from ER motif is present at residues 502 to 505 (KEDL).

The protein belongs to the protein disulfide isomerase family.

It is found in the endoplasmic reticulum. The protein resides in the endoplasmic reticulum lumen. The protein localises to the melanosome. It catalyses the reaction Catalyzes the rearrangement of -S-S- bonds in proteins.. In terms of biological role, protein disulfide isomerase that catalyzes the formation, isomerization, and reduction or oxidation of disulfide bonds in client proteins and functions as a protein folding chaperone. The protein is Protein disulfide-isomerase A3 (PDIA3) of Gallus gallus (Chicken).